The primary structure comprises 326 residues: DNA-directed RNA polymerase subunit alpha (326 aa).

An alpha N-terminal domain (alpha-NTD) region spans residues 1–231 (MQTNLLKPKI…DQLVVFAALE (231 aa)). Residues 247 to 326 (VDPMLMRPVD…ESWPPANLEK (80 aa)) form an alpha C-terminal domain (alpha-CTD) region.

The protein belongs to the RNA polymerase alpha chain family. Homodimer. The RNAP catalytic core consists of 2 alpha, 1 beta, 1 beta' and 1 omega subunit. When a sigma factor is associated with the core the holoenzyme is formed, which can initiate transcription.

The catalysed reaction is RNA(n) + a ribonucleoside 5'-triphosphate = RNA(n+1) + diphosphate. DNA-dependent RNA polymerase catalyzes the transcription of DNA into RNA using the four ribonucleoside triphosphates as substrates. The protein is DNA-directed RNA polymerase subunit alpha of Polynucleobacter necessarius subsp. necessarius (strain STIR1).